We begin with the raw amino-acid sequence, 678 residues long: F-box/LRR-repeat protein 5 (678 aa).

Positions 1–159 (MAPFPDEVDL…IKKKVIAQHC (159 aa)) are hemerythrin-like. Positions 15, 57, 58, 61, 80, 126, and 130 each coordinate Fe(3+). An F-box domain is found at 202 to 248 (SSSISSLPPEVMLNIFTYLNPQDLCRCSQVNTEWAQLAKTGSLWRHL). Residues 285–308 (YQEWDEDADIDESEETGEEEDSSI) form a disordered region. Residues 287–306 (EWDEDADIDESEETGEEEDS) show a composition bias toward acidic residues. LRR repeat units lie at residues 314–340 (EKELLNSLVHYILPYVGHSVKTLVLAY), 341–366 (SSATSSKVIRQMLEYCPNLEHLDLTQ), 367–392 (TDISDSAFNGWHFGACQTLHHIDLSG), 393–420 (CDKITDLTLEKLSVALGIPSAHKKRLLK), 566–594 (HSDITDCFPGSAKSDQQAARALQFLSLSG), 595–622 (CHQITDHGLRALTIGGGLPKLEHLNLSG), and 623–648 (CLNVTGSGLQDLVATCPSLNDEHFYY). [2Fe-2S] cluster contacts are provided by cysteine 649, cysteine 663, cysteine 673, and cysteine 674. The LRR 8 repeat unit spans residues 655 to 678 (PHGATASGCQNLQCGFRMCCRSGE).

As to quaternary structure, part of a SCF (SKP1-cullin-F-box) protein ligase complex. It depends on [2Fe-2S] cluster as a cofactor. Ubiquitinated upon iron and oxygen depletion, leading to its degradation by the proteasome. Ubiquitination is regulated by the hemerythrin-like region that acts as an oxygen and iron sensor.

It is found in the cytoplasm. The protein localises to the perinuclear region. The protein resides in the nucleus. Its pathway is protein modification; protein ubiquitination. Functionally, component of some SCF (SKP1-cullin-F-box) protein ligase complex that plays a central role in iron homeostasis by promoting the ubiquitination and subsequent degradation of ireb2/irp2. Upon high iron and oxygen level, it specifically recognizes and binds ireb2/irp2, promoting its ubiquitination and degradation by the proteasome. The chain is F-box/LRR-repeat protein 5 (fbxl5) from Xenopus laevis (African clawed frog).